A 122-amino-acid polypeptide reads, in one-letter code: NADH-quinone oxidoreductase subunit A (122 aa).

3 helical membrane-spanning segments follow: residues M10–G30, I66–V86, and L91–A111.

This sequence belongs to the complex I subunit 3 family. In terms of assembly, NDH-1 is composed of 14 different subunits. Subunits NuoA, H, J, K, L, M, N constitute the membrane sector of the complex.

The protein localises to the cell membrane. The catalysed reaction is a quinone + NADH + 5 H(+)(in) = a quinol + NAD(+) + 4 H(+)(out). In terms of biological role, NDH-1 shuttles electrons from NADH, via FMN and iron-sulfur (Fe-S) centers, to quinones in the respiratory chain. The immediate electron acceptor for the enzyme in this species is believed to be a menaquinone. Couples the redox reaction to proton translocation (for every two electrons transferred, four hydrogen ions are translocated across the cytoplasmic membrane), and thus conserves the redox energy in a proton gradient. This Bacillus mycoides (strain KBAB4) (Bacillus weihenstephanensis) protein is NADH-quinone oxidoreductase subunit A.